The following is a 147-amino-acid chain: D-aminoacyl-tRNA deacylase (147 aa).

Positions 136–137 (GP) match the Gly-cisPro motif, important for rejection of L-amino acids motif.

This sequence belongs to the DTD family. Homodimer.

The protein localises to the cytoplasm. The catalysed reaction is glycyl-tRNA(Ala) + H2O = tRNA(Ala) + glycine + H(+). It carries out the reaction a D-aminoacyl-tRNA + H2O = a tRNA + a D-alpha-amino acid + H(+). Its function is as follows. An aminoacyl-tRNA editing enzyme that deacylates mischarged D-aminoacyl-tRNAs. Also deacylates mischarged glycyl-tRNA(Ala), protecting cells against glycine mischarging by AlaRS. Acts via tRNA-based rather than protein-based catalysis; rejects L-amino acids rather than detecting D-amino acids in the active site. By recycling D-aminoacyl-tRNA to D-amino acids and free tRNA molecules, this enzyme counteracts the toxicity associated with the formation of D-aminoacyl-tRNA entities in vivo and helps enforce protein L-homochirality. The chain is D-aminoacyl-tRNA deacylase from Streptococcus thermophilus (strain CNRZ 1066).